Here is a 469-residue protein sequence, read N- to C-terminus: Glutamate--tRNA ligase 1 (469 aa).

A 'HIGH' region motif is present at residues 10 to 20 (PSPTGYLHIGG). Positions 99, 101, 126, and 128 each coordinate Zn(2+). The 'KMSKS' region signature appears at 237-241 (RLSKR). Lys240 provides a ligand contact to ATP.

Belongs to the class-I aminoacyl-tRNA synthetase family. Glutamate--tRNA ligase type 1 subfamily. Monomer. Zn(2+) serves as cofactor.

The protein localises to the cytoplasm. The enzyme catalyses tRNA(Glu) + L-glutamate + ATP = L-glutamyl-tRNA(Glu) + AMP + diphosphate. Its function is as follows. Catalyzes the attachment of glutamate to tRNA(Glu) in a two-step reaction: glutamate is first activated by ATP to form Glu-AMP and then transferred to the acceptor end of tRNA(Glu). The polypeptide is Glutamate--tRNA ligase 1 (Coxiella burnetii (strain CbuK_Q154) (Coxiella burnetii (strain Q154))).